Consider the following 164-residue polypeptide: MTQIDYTRAAKYFLLQDFWVGMKLGLKYFFSPKATINYPHEKGPLSPRFRGEHALRRYPNGEERCIACKLCEAICPAQAITIDAEPREDGSRRTTRYDIDMTKCIYCGFCQEACPVDAIVEGPNFEFATETREELFYDKEKLLSNGDRWEAEIARNLELDAPYR.

2 4Fe-4S ferredoxin-type domains span residues 55-85 (LRRY…IDAE) and 95-124 (TRYD…EGPN). [4Fe-4S] cluster contacts are provided by cysteine 65, cysteine 68, cysteine 71, cysteine 75, cysteine 104, cysteine 107, cysteine 110, and cysteine 114.

Belongs to the complex I 23 kDa subunit family. As to quaternary structure, NDH-1 is composed of 14 different subunits. Subunits NuoA, H, J, K, L, M, N constitute the membrane sector of the complex. [4Fe-4S] cluster serves as cofactor.

The protein resides in the cell inner membrane. The catalysed reaction is a quinone + NADH + 5 H(+)(in) = a quinol + NAD(+) + 4 H(+)(out). In terms of biological role, NDH-1 shuttles electrons from NADH, via FMN and iron-sulfur (Fe-S) centers, to quinones in the respiratory chain. The immediate electron acceptor for the enzyme in this species is believed to be ubiquinone. Couples the redox reaction to proton translocation (for every two electrons transferred, four hydrogen ions are translocated across the cytoplasmic membrane), and thus conserves the redox energy in a proton gradient. The protein is NADH-quinone oxidoreductase subunit I of Ruegeria pomeroyi (strain ATCC 700808 / DSM 15171 / DSS-3) (Silicibacter pomeroyi).